The following is a 115-amino-acid chain: MPRPSAGSHHNDKLHVKKGDTVIVLRGKHKGQTGKVLLALPRDAKVVVEGVNLVTKHVKPSAANPQGGIEQREAALHASKVALVDPETGKPTRVRKAIVDGKKVRVAVKSGKVID.

It belongs to the universal ribosomal protein uL24 family. In terms of assembly, part of the 50S ribosomal subunit.

Its function is as follows. One of two assembly initiator proteins, it binds directly to the 5'-end of the 23S rRNA, where it nucleates assembly of the 50S subunit. Functionally, one of the proteins that surrounds the polypeptide exit tunnel on the outside of the subunit. The sequence is that of Large ribosomal subunit protein uL24 from Deinococcus geothermalis (strain DSM 11300 / CIP 105573 / AG-3a).